The chain runs to 549 residues: Hydroxylamine reductase (549 aa).

[4Fe-4S] cluster-binding residues include Cys-5, Cys-8, Cys-17, and Cys-23. 8 residues coordinate hybrid [4Fe-2O-2S] cluster: His-250, Glu-274, Cys-318, Cys-404, Cys-432, Cys-457, Glu-491, and Lys-493. Position 404 is a cysteine persulfide (Cys-404).

Belongs to the HCP family. [4Fe-4S] cluster is required as a cofactor. Hybrid [4Fe-2O-2S] cluster serves as cofactor.

It is found in the cytoplasm. The enzyme catalyses A + NH4(+) + H2O = hydroxylamine + AH2 + H(+). Functionally, catalyzes the reduction of hydroxylamine to form NH(3) and H(2)O. The chain is Hydroxylamine reductase from Geobacter metallireducens (strain ATCC 53774 / DSM 7210 / GS-15).